A 247-amino-acid chain; its full sequence is Carboxy-S-adenosyl-L-methionine synthase (247 aa).

S-adenosyl-L-methionine-binding positions include Tyr40, 65–67 (GCS), 90–91 (DN), 122–123 (DI), Asn137, and Arg204.

This sequence belongs to the class I-like SAM-binding methyltransferase superfamily. Cx-SAM synthase family. In terms of assembly, homodimer.

It catalyses the reaction prephenate + S-adenosyl-L-methionine = carboxy-S-adenosyl-L-methionine + 3-phenylpyruvate + H2O. Functionally, catalyzes the conversion of S-adenosyl-L-methionine (SAM) to carboxy-S-adenosyl-L-methionine (Cx-SAM). In Stutzerimonas stutzeri (strain A1501) (Pseudomonas stutzeri), this protein is Carboxy-S-adenosyl-L-methionine synthase.